We begin with the raw amino-acid sequence, 301 residues long: Acetyl-coenzyme A carboxylase carboxyl transferase subunit beta (301 aa).

Residues 25–294 (LWIKCPETGE…SAANDVTRGA (270 aa)) form the CoA carboxyltransferase N-terminal domain.

This sequence belongs to the AccD/PCCB family. In terms of assembly, acetyl-CoA carboxylase is a heterohexamer composed of biotin carboxyl carrier protein (AccB), biotin carboxylase (AccC) and two subunits each of ACCase subunit alpha (AccA) and ACCase subunit beta (AccD).

It localises to the cytoplasm. It carries out the reaction N(6)-carboxybiotinyl-L-lysyl-[protein] + acetyl-CoA = N(6)-biotinyl-L-lysyl-[protein] + malonyl-CoA. It functions in the pathway lipid metabolism; malonyl-CoA biosynthesis; malonyl-CoA from acetyl-CoA: step 1/1. In terms of biological role, component of the acetyl coenzyme A carboxylase (ACC) complex. Biotin carboxylase (BC) catalyzes the carboxylation of biotin on its carrier protein (BCCP) and then the CO(2) group is transferred by the transcarboxylase to acetyl-CoA to form malonyl-CoA. The chain is Acetyl-coenzyme A carboxylase carboxyl transferase subunit beta from Rhizobium etli (strain ATCC 51251 / DSM 11541 / JCM 21823 / NBRC 15573 / CFN 42).